A 246-amino-acid chain; its full sequence is Large ribosomal subunit protein uL2 (246 aa).

The interval 196-226 (MSPYAHPHGGGSHQKGGTPVPKTAPPGQKVG) is disordered.

It belongs to the universal ribosomal protein uL2 family. As to quaternary structure, part of the 50S ribosomal subunit. Forms a bridge to the 30S subunit in the 70S ribosome.

One of the primary rRNA binding proteins. Required for association of the 30S and 50S subunits to form the 70S ribosome, for tRNA binding and peptide bond formation. It has been suggested to have peptidyltransferase activity; this is somewhat controversial. Makes several contacts with the 16S rRNA in the 70S ribosome. This is Large ribosomal subunit protein uL2 from Pyrobaculum arsenaticum (strain DSM 13514 / JCM 11321 / PZ6).